Consider the following 294-residue polypeptide: MNNIFKGLITAIITPFRDNKLDLNALEKILEYQINAEVNAVVIAGSTGEGSSLSFEEYKLLLQTAKDIVNKRIPVISGCSSNNTACAIELAAESTKIGVDGFMISPPSYLKPTQGGIYKHFEAIHEASNLPIMLYSVPSRTGVDFTDETILKLSKLSRILALKDAGIDLERPLRIKSVINKEFNLLCGNDDLSLAFNAQGGVGCVSVASNITPKLCKELQEKWHNNDVKGALGIHQRLLPLYKALFVESNPIPVKYAMYYLGFCTNEIRLPLTEATDTTKKQIEEIITSLSIKV.

T47 contacts pyruvate. Y135 serves as the catalytic Proton donor/acceptor. K163 acts as the Schiff-base intermediate with substrate in catalysis. Position 205 (V205) interacts with pyruvate.

This sequence belongs to the DapA family. Homotetramer; dimer of dimers.

The protein resides in the cytoplasm. The enzyme catalyses L-aspartate 4-semialdehyde + pyruvate = (2S,4S)-4-hydroxy-2,3,4,5-tetrahydrodipicolinate + H2O + H(+). It participates in amino-acid biosynthesis; L-lysine biosynthesis via DAP pathway; (S)-tetrahydrodipicolinate from L-aspartate: step 3/4. In terms of biological role, catalyzes the condensation of (S)-aspartate-beta-semialdehyde [(S)-ASA] and pyruvate to 4-hydroxy-tetrahydrodipicolinate (HTPA). In Rickettsia bellii (strain RML369-C), this protein is 4-hydroxy-tetrahydrodipicolinate synthase.